We begin with the raw amino-acid sequence, 452 residues long: UDP-N-acetylmuramoylalanine--D-glutamate ligase (452 aa).

115-121 contributes to the ATP binding site; sequence GTNGKTT.

Belongs to the MurCDEF family.

The protein localises to the cytoplasm. The catalysed reaction is UDP-N-acetyl-alpha-D-muramoyl-L-alanine + D-glutamate + ATP = UDP-N-acetyl-alpha-D-muramoyl-L-alanyl-D-glutamate + ADP + phosphate + H(+). It participates in cell wall biogenesis; peptidoglycan biosynthesis. Functionally, cell wall formation. Catalyzes the addition of glutamate to the nucleotide precursor UDP-N-acetylmuramoyl-L-alanine (UMA). The chain is UDP-N-acetylmuramoylalanine--D-glutamate ligase from Geobacter metallireducens (strain ATCC 53774 / DSM 7210 / GS-15).